Here is a 592-residue protein sequence, read N- to C-terminus: Aspartate--tRNA ligase (592 aa).

Residue glutamate 177 participates in L-aspartate binding. Residues 201 to 204 (QIFK) are aspartate. Residue arginine 223 participates in L-aspartate binding. Residues 223-225 (RDE) and glutamine 232 contribute to the ATP site. Residue histidine 451 participates in L-aspartate binding. Glutamate 485 is a binding site for ATP. Arginine 492 serves as a coordination point for L-aspartate. Position 537 to 540 (537 to 540 (GLDR)) interacts with ATP.

This sequence belongs to the class-II aminoacyl-tRNA synthetase family. Type 1 subfamily. In terms of assembly, homodimer.

The protein resides in the cytoplasm. It catalyses the reaction tRNA(Asp) + L-aspartate + ATP = L-aspartyl-tRNA(Asp) + AMP + diphosphate. In terms of biological role, catalyzes the attachment of L-aspartate to tRNA(Asp) in a two-step reaction: L-aspartate is first activated by ATP to form Asp-AMP and then transferred to the acceptor end of tRNA(Asp). The sequence is that of Aspartate--tRNA ligase from Bacillus licheniformis (strain ATCC 14580 / DSM 13 / JCM 2505 / CCUG 7422 / NBRC 12200 / NCIMB 9375 / NCTC 10341 / NRRL NRS-1264 / Gibson 46).